Consider the following 305-residue polypeptide: MIILGIESSHDDTSIAILENKKVLFQLSLSQVKTHEKFGGTIPEIASREHVKNINILLTMLIEKFDLSKLDYIAYTEKPGLIGALQIGFLFASALSISLNKKLIPINHLEAHFFSSEITNEILYPAVGLVVSGGHSLIYYVKNVNSLEIIGETLDDAIGEVFDKISRKLNLGFPGGPIIDRISSEIVGDIKFTIPKTERDLDFSFSGIKTQVINYINNSKNLDINNVASSFQKTTIDYIEEKLKLAIKKHHPQSLVVGGGVSANTELRKRLSTLHANVLFPKKEYTTDNGAMIAITAFLKLNKSS.

Fe cation-binding residues include histidine 108 and histidine 112. Substrate-binding positions include valine 130–glycine 134, aspartate 163, glycine 176, aspartate 180, and asparagine 264. Fe cation is bound at residue aspartate 288.

It belongs to the KAE1 / TsaD family. Fe(2+) serves as cofactor.

Its subcellular location is the cytoplasm. It carries out the reaction L-threonylcarbamoyladenylate + adenosine(37) in tRNA = N(6)-L-threonylcarbamoyladenosine(37) in tRNA + AMP + H(+). In terms of biological role, required for the formation of a threonylcarbamoyl group on adenosine at position 37 (t(6)A37) in tRNAs that read codons beginning with adenine. Is involved in the transfer of the threonylcarbamoyl moiety of threonylcarbamoyl-AMP (TC-AMP) to the N6 group of A37, together with TsaE and TsaB. TsaD likely plays a direct catalytic role in this reaction. In Mycoplasma mobile (strain ATCC 43663 / 163K / NCTC 11711) (Mesomycoplasma mobile), this protein is tRNA N6-adenosine threonylcarbamoyltransferase.